The following is a 448-amino-acid chain: MAKRGRKPKELVPGPGSIDPSDVPKLEGASVPVMSTSYDVVVDREFDELLQGKDGLLVYHKMLSDGTVKNALNYIFGRIRSAKWYVEPASTDPEDIAIAAFIHAQLGIDDASVGKYPFGRLFAIYENAYIYGMAAGEIVLTLGADGKLILDKIVPIHPFNIDEVLYDEEGGPKALKLSGEVKGGSQFVSGLEIPIWKTVVFLHNDDGSFTGQSALRAAVPHWLAKRALILLINHGLERFMIGVPTLTIPKSVRQGTKQWEAAKEIVKNFVQKPRHGIILPDDWKFDTVDLKSAMPDAIPYLTYHDAGIARALGIDFNTVQLNMGVQAINIGEFVSLTQQTIISLQREFASAVNLYLIPKLVLPNWPSATRFPRLTFEMEERNDFSAAANLMGMLINAVKDSEDIPTELKALIDALPSKMRRALGVVDEVREAVRQPADSRYLYTRRRR.

The segment at 1-25 is disordered; it reads MAKRGRKPKELVPGPGSIDPSDVPK.

The protein belongs to the P23virus portal protein family. In terms of assembly, homododecamer. Interacts with the capsid protein. Interacts with the terminase large subunit; this interaction allows the packaging of viral DNA.

It localises to the virion. Functionally, forms the portal vertex of the capsid. This portal plays critical roles in head assembly, genome packaging, neck/tail attachment, and genome ejection. The portal protein multimerizes as a single ring-shaped homododecamer arranged around a central channel. Forms the portal vertex of the capsid. This portal plays critical roles in head assembly, genome packaging, neck/tail attachment, and genome ejection. The polypeptide is Portal protein (Thermus thermophilus (Thermus thermophilus phage G20c)).